Reading from the N-terminus, the 492-residue chain is Solute carrier family 2, facilitated glucose transporter member 1 (492 aa).

Met1 bears the N-acetylmethionine mark. Over 1-11 (MEPTSKKLTGR) the chain is Cytoplasmic. A helical transmembrane segment spans residues 12 to 33 (LMLAVGGAVLGSLQFGYNTGVI). The Extracellular segment spans residues 34–66 (NAPQKVIEEFYNQTWVQRYGEPIPPATLTTLWS). A glycan (N-linked (GlcNAc...) asparagine) is linked at Asn45. Residues 67–87 (LSVAIFSVGGMIGSFSVGLFV) form a helical membrane-spanning segment. The Cytoplasmic segment spans residues 88 to 90 (NRF). A helical membrane pass occupies residues 91 to 112 (GRRNSMLMMNLLAFVSAVLMGF). Over 113 to 120 (SKLGKSFE) the chain is Extracellular. A helical transmembrane segment spans residues 121-144 (MLILGRFIIGVYCGLTTGFVPMYV). The Cytoplasmic portion of the chain corresponds to 145–155 (GEVSPTELRGA). A helical membrane pass occupies residues 156–176 (LGTLHQLGIVVGILIAQVFGL). D-glucose is bound at residue Gln161. At 177–185 (DSIMGNQEL) the chain is on the extracellular side. The helical transmembrane segment at 186–206 (WPLLLSVIFIPALLQCILLPF) threads the bilayer. The Cytoplasmic portion of the chain corresponds to 207 to 271 (CPESPRFLLI…LFRSAAYRQP (65 aa)). A Phosphoserine modification is found at Ser226. The helical transmembrane segment at 272–293 (ILIAVVLQLSQQLSGINAVFYY) threads the bilayer. Residues 282–283 (QQ) and Asn288 contribute to the D-glucose site. Residues 294–306 (STSIFEKAGVQQP) lie on the Extracellular side of the membrane. The helical transmembrane segment at 307 to 328 (VYATIGSGIVNTAFTVVSLFVV) threads the bilayer. Asn317 contacts D-glucose. Over 329 to 334 (ERAGRR) the chain is Cytoplasmic. The helical transmembrane segment at 335 to 355 (TLHLIGLAGMAGCAVLMTIAL) threads the bilayer. Residues 356–365 (ALLERLPWMS) are Extracellular-facing. The helical transmembrane segment at 366 to 388 (YLSIVAIFGFVAFFEVGPGPIPW) threads the bilayer. Glu380 and Trp388 together coordinate D-glucose. Residues 389–401 (FIVAELFSQGPRP) are Cytoplasmic-facing. Residues 402-422 (AAIAVAGFSNWTSNFIVGMCF) traverse the membrane as a helical segment. Over 423 to 429 (QYVEQLC) the chain is Extracellular. Residues 430-450 (GPYVFIIFTVLLVLFFIFTYF) traverse the membrane as a helical segment. The Cytoplasmic segment spans residues 451-492 (KVPETKGRTFDEIASGFRQGGASQSDKTPEELFHPLGADSQV). Residue Ser465 is modified to Phosphoserine. The segment at 468–492 (RQGGASQSDKTPEELFHPLGADSQV) is disordered. Thr478 is modified (phosphothreonine). Ser490 is subject to Phosphoserine.

It belongs to the major facilitator superfamily. Sugar transporter (TC 2.A.1.1) family. Glucose transporter subfamily. As to quaternary structure, found in a complex with ADD2, DMTN and SLC2A1. Interacts (via C-terminus cytoplasmic region) with DMTN. Interacts with SNX27; the interaction is required when endocytosed to prevent degradation in lysosomes and promote recycling to the plasma membrane. Interacts with GIPC (via PDZ domain). Interacts with STOM. Interacts with SGTA (via Gln-rich region). Interacts with BSG. Interacts with SMIM43; the interaction may promote SLC2A1-mediated glucose transport to meet the energy needs of mesendoderm differentiation. In terms of processing, phosphorylation at Ser-226 by PKC promotes glucose uptake by increasing cell membrane localization. In terms of tissue distribution, detected in brain capillary (at protein level). Detected in brain capillary.

It localises to the cell membrane. Its subcellular location is the photoreceptor inner segment. It carries out the reaction D-glucose(out) = D-glucose(in). The uptake of glucose is inhibited by cytochalasin B. Glucose uptake is increased in response to phorbol ester 12-O-tetradecanoylphorbol-13-acetate (TPA) treatment: TPA-induced glucose uptake requires phosphorylation at Ser-226. Its function is as follows. Facilitative glucose transporter, which is responsible for constitutive or basal glucose uptake. Has a very broad substrate specificity; can transport a wide range of aldoses including both pentoses and hexoses. Most important energy carrier of the brain: present at the blood-brain barrier and assures the energy-independent, facilitative transport of glucose into the brain. In association with BSG and NXNL1, promotes retinal cone survival by increasing glucose uptake into photoreceptors. Required for mesendoderm differentiation. The chain is Solute carrier family 2, facilitated glucose transporter member 1 from Bos taurus (Bovine).